The sequence spans 363 residues: MIIDTTEVQAINSFSILESLKEVYGIIWMLIPIFTLVLGITIGVLVIVWLEREISAGIQQRIGPEYAGPLGILQALADGTKLLFKENLLPSRGDTRLFSIGPSIAVISILLSYLVIPFSYHLVLADLSIGVFLWIAISSIAPVGLLMSGYGSNNKYSFLGGLRAAAQSISYEIPLTLCVLSISLLSNSSSTVDIVEAQSKYGFWGWNLWRQPIGFLVFLISSLAECERLPFDLPEAEEELVAGYQTEYSGIKFGLFYVASYLNLLVSSLFVTVLYLGGWNLSIPYIFVPEVFEITKRGRVFGTIIGIFITLAKTYLFLFIPIATRWTLPRLRMDQLLNLGWKFLLPISLGNLLLTTCSQLISL.

6 helical membrane passes run 30-50, 104-124, 127-147, 248-268, 300-320, and 343-363; these read LIPI…IVWL, IAVI…HLVL, LSIG…GLLM, YSGI…LVSS, VFGT…FLFI, and FLLP…LISL.

The protein belongs to the complex I subunit 1 family. NDH is composed of at least 16 different subunits, 5 of which are encoded in the nucleus.

Its subcellular location is the plastid. The protein resides in the chloroplast thylakoid membrane. It carries out the reaction a plastoquinone + NADH + (n+1) H(+)(in) = a plastoquinol + NAD(+) + n H(+)(out). It catalyses the reaction a plastoquinone + NADPH + (n+1) H(+)(in) = a plastoquinol + NADP(+) + n H(+)(out). In terms of biological role, NDH shuttles electrons from NAD(P)H:plastoquinone, via FMN and iron-sulfur (Fe-S) centers, to quinones in the photosynthetic chain and possibly in a chloroplast respiratory chain. The immediate electron acceptor for the enzyme in this species is believed to be plastoquinone. Couples the redox reaction to proton translocation, and thus conserves the redox energy in a proton gradient. This chain is NAD(P)H-quinone oxidoreductase subunit 1, chloroplastic, found in Lactuca sativa (Garden lettuce).